The sequence spans 175 residues: NAD(P)H-quinone oxidoreductase subunit J (175 aa).

Belongs to the complex I 30 kDa subunit family. In terms of assembly, NDH-1 can be composed of about 15 different subunits; different subcomplexes with different compositions have been identified which probably have different functions.

Its subcellular location is the cellular thylakoid membrane. It catalyses the reaction a plastoquinone + NADH + (n+1) H(+)(in) = a plastoquinol + NAD(+) + n H(+)(out). The enzyme catalyses a plastoquinone + NADPH + (n+1) H(+)(in) = a plastoquinol + NADP(+) + n H(+)(out). Its function is as follows. NDH-1 shuttles electrons from an unknown electron donor, via FMN and iron-sulfur (Fe-S) centers, to quinones in the respiratory and/or the photosynthetic chain. The immediate electron acceptor for the enzyme in this species is believed to be plastoquinone. Couples the redox reaction to proton translocation, and thus conserves the redox energy in a proton gradient. Cyanobacterial NDH-1 also plays a role in inorganic carbon-concentration. The sequence is that of NAD(P)H-quinone oxidoreductase subunit J from Nostoc sp. (strain PCC 7120 / SAG 25.82 / UTEX 2576).